A 240-amino-acid chain; its full sequence is Putative exosome complex component RRP41 (240 aa).

It belongs to the RNase PH family. As to quaternary structure, component of the RNA exosome complex.

The protein resides in the cytoplasm. It localises to the nucleus. The protein localises to the nucleolus. Its subcellular location is the nucleoplasm. Non-catalytic component of the RNA exosome complex which has 3'-&gt;5' exoribonuclease activity and participates in a multitude of cellular RNA processing and degradation events. This Caenorhabditis elegans protein is Putative exosome complex component RRP41 (exos-4.1).